A 263-amino-acid chain; its full sequence is Pyridoxine 5'-phosphate synthase (263 aa).

A 3-amino-2-oxopropyl phosphate-binding site is contributed by Asn15. 17–18 (DH) contacts 1-deoxy-D-xylulose 5-phosphate. Arg26 provides a ligand contact to 3-amino-2-oxopropyl phosphate. The active-site Proton acceptor is the His51. 1-deoxy-D-xylulose 5-phosphate contacts are provided by Arg53 and His58. The active-site Proton acceptor is Glu78. Thr108 contacts 1-deoxy-D-xylulose 5-phosphate. The Proton donor role is filled by His199. 3-amino-2-oxopropyl phosphate-binding positions include Gly200 and 221–222 (GH).

The protein belongs to the PNP synthase family. Homooctamer; tetramer of dimers.

The protein localises to the cytoplasm. It catalyses the reaction 3-amino-2-oxopropyl phosphate + 1-deoxy-D-xylulose 5-phosphate = pyridoxine 5'-phosphate + phosphate + 2 H2O + H(+). It functions in the pathway cofactor biosynthesis; pyridoxine 5'-phosphate biosynthesis; pyridoxine 5'-phosphate from D-erythrose 4-phosphate: step 5/5. In terms of biological role, catalyzes the complicated ring closure reaction between the two acyclic compounds 1-deoxy-D-xylulose-5-phosphate (DXP) and 3-amino-2-oxopropyl phosphate (1-amino-acetone-3-phosphate or AAP) to form pyridoxine 5'-phosphate (PNP) and inorganic phosphate. The sequence is that of Pyridoxine 5'-phosphate synthase from Ralstonia nicotianae (strain ATCC BAA-1114 / GMI1000) (Ralstonia solanacearum).